Consider the following 429-residue polypeptide: Enolase (429 aa).

A (2R)-2-phosphoglycerate-binding site is contributed by glutamine 163. Glutamate 205 functions as the Proton donor in the catalytic mechanism. The Mg(2+) site is built by aspartate 242, glutamate 285, and aspartate 312. Positions 337, 366, 367, and 388 each coordinate (2R)-2-phosphoglycerate. Lysine 337 functions as the Proton acceptor in the catalytic mechanism.

The protein belongs to the enolase family. Requires Mg(2+) as cofactor.

The protein localises to the cytoplasm. The protein resides in the secreted. Its subcellular location is the cell surface. The catalysed reaction is (2R)-2-phosphoglycerate = phosphoenolpyruvate + H2O. The protein operates within carbohydrate degradation; glycolysis; pyruvate from D-glyceraldehyde 3-phosphate: step 4/5. Its function is as follows. Catalyzes the reversible conversion of 2-phosphoglycerate (2-PG) into phosphoenolpyruvate (PEP). It is essential for the degradation of carbohydrates via glycolysis. This chain is Enolase, found in Methylorubrum extorquens (strain CM4 / NCIMB 13688) (Methylobacterium extorquens).